We begin with the raw amino-acid sequence, 93 residues long: Bombyxin B-11 (93 aa).

The N-terminal stretch at 1–22 (MMKTAVMFILVVVISLTYSSEE) is a signal peptide. 3 cysteine pairs are disulfide-bonded: Cys30/Cys75, Cys42/Cys92, and Cys74/Cys79. Residues 49–64 (GGAQYAPYWQETYLRS) constitute a propeptide, bombyxin B-11 C peptide.

The protein belongs to the insulin family. In terms of assembly, heterodimer of a B chain and an A chain linked by two disulfide bonds.

The protein resides in the secreted. Functionally, brain peptide responsible for activation of prothoracic glands to produce ecdysone in insects. This Bombyx mori (Silk moth) protein is Bombyxin B-11 (BBXB11).